The chain runs to 475 residues: Protein transport protein Sec61 subunit alpha (475 aa).

Over 1–32 (MGFRFLDIVKPFTSLVPEVGQPDRKIPFREKV) the chain is Cytoplasmic. Residues 33–53 (LWTAICLFIFLVCSQIPLYGI) form a helical membrane-spanning segment. The Lumenal segment spans residues 54–75 (RSTDSSDPFYWAKVIMASNRGT). The chain crosses the membrane as a helical span at residues 76–96 (LMELGISPIVTSGMVMQLLAG). Topologically, residues 97–118 (AKLIEIDQSVKADRDLFSAAQK) are cytoplasmic. Residues 119-139 (LFGMLICVGQGVAYIWSGSYG) form a helical membrane-spanning segment. Residues 140–145 (DPAVLG) lie on the Lumenal side of the membrane. Residues 146-166 (FGNCFLIVLQLFFAGIIVMLL) form a helical membrane-spanning segment. Topologically, residues 167–173 (DELLQKG) are cytoplasmic. A helical transmembrane segment spans residues 174–194 (YGIGSGISLFIATNICETIVW). At 195–241 (KTFSPTTVSVGKGTEFEGAVIALFHLLLTRNDKVRALKEAFYRQNLP) the chain is on the lumenal side. The helical transmembrane segment at 242–262 (NITNLLATVLIFMVVIYFQGF) threads the bilayer. The Cytoplasmic segment spans residues 263 to 289 (RVDLPVKSTRVSGQQGTYPIKLFYTSN). The chain crosses the membrane as a helical span at residues 290–310 (IPIILQSALVSNLYFISQLLY). The Lumenal portion of the chain corresponds to 311-353 (RRFPDNILVNLFGAWRTSEYSQQMIPVSGLTYYISSPNNMSAV). The chain crosses the membrane as a helical span at residues 354–374 (LADPFHALFYITFMLTSCALF). The Cytoplasmic portion of the chain corresponds to 375–411 (SKVWIEVSGSSARDVAKQLKDQQMTMKGHRDTSVIKE). Residues 412 to 434 (LNRYIPTAAAFGGLCIGALTVVA) traverse the membrane as a helical segment. Residues 435-440 (DFMGAI) are Lumenal-facing. The chain crosses the membrane as a helical span at residues 441–461 (GSGTGILLAVTIIYQYFETFV). The Cytoplasmic portion of the chain corresponds to 462–475 (KEQQELSGGIGGLF).

This sequence belongs to the SecY/SEC61-alpha family. In terms of assembly, heterotrimeric complex composed of SEC61-alpha, SEC61-beta and SEC61-gamma.

It is found in the endoplasmic reticulum membrane. Its function is as follows. Appears to play a crucial role in the insertion of secretory and membrane polypeptides into the ER. It is required for assembly of membrane and secretory proteins. Found to be tightly associated with membrane-bound ribosomes, either directly or through adaptor proteins. The protein is Protein transport protein Sec61 subunit alpha (sec61a) of Dictyostelium discoideum (Social amoeba).